The primary structure comprises 331 residues: Glycerol-3-phosphate dehydrogenase [NAD(P)+] (331 aa).

NADPH-binding residues include Ser-10, Trp-11, and Lys-101. Lys-101, Gly-132, and Ser-134 together coordinate sn-glycerol 3-phosphate. Position 136 (Ala-136) interacts with NADPH. The sn-glycerol 3-phosphate site is built by Lys-188, Asp-241, Ser-251, Arg-252, and Asn-253. The active-site Proton acceptor is Lys-188. Arg-252 serves as a coordination point for NADPH. Residues Val-276 and Glu-278 each contribute to the NADPH site.

This sequence belongs to the NAD-dependent glycerol-3-phosphate dehydrogenase family.

It localises to the cytoplasm. It carries out the reaction sn-glycerol 3-phosphate + NAD(+) = dihydroxyacetone phosphate + NADH + H(+). The enzyme catalyses sn-glycerol 3-phosphate + NADP(+) = dihydroxyacetone phosphate + NADPH + H(+). It functions in the pathway membrane lipid metabolism; glycerophospholipid metabolism. In terms of biological role, catalyzes the reduction of the glycolytic intermediate dihydroxyacetone phosphate (DHAP) to sn-glycerol 3-phosphate (G3P), the key precursor for phospholipid synthesis. This chain is Glycerol-3-phosphate dehydrogenase [NAD(P)+], found in Acholeplasma laidlawii (strain PG-8A).